Here is a 360-residue protein sequence, read N- to C-terminus: Phospho-N-acetylmuramoyl-pentapeptide-transferase (360 aa).

A run of 10 helical transmembrane segments spans residues 26–46 (SIMA…KVIN), 73–93 (TMGG…WADL), 98–118 (VWFT…DDYW), 132–152 (WKYF…YAMG), 168–188 (VMPQ…VGTS), 199–219 (GLAI…AWAT), 236–256 (SGEL…FLWY), 263–283 (VFMG…IAVL), 288–308 (LLLL…ILQV), and 338–358 (VIVR…VTLK).

The protein belongs to the glycosyltransferase 4 family. MraY subfamily. It depends on Mg(2+) as a cofactor.

The protein localises to the cell inner membrane. The enzyme catalyses UDP-N-acetyl-alpha-D-muramoyl-L-alanyl-gamma-D-glutamyl-meso-2,6-diaminopimeloyl-D-alanyl-D-alanine + di-trans,octa-cis-undecaprenyl phosphate = di-trans,octa-cis-undecaprenyl diphospho-N-acetyl-alpha-D-muramoyl-L-alanyl-D-glutamyl-meso-2,6-diaminopimeloyl-D-alanyl-D-alanine + UMP. Its pathway is cell wall biogenesis; peptidoglycan biosynthesis. In terms of biological role, catalyzes the initial step of the lipid cycle reactions in the biosynthesis of the cell wall peptidoglycan: transfers peptidoglycan precursor phospho-MurNAc-pentapeptide from UDP-MurNAc-pentapeptide onto the lipid carrier undecaprenyl phosphate, yielding undecaprenyl-pyrophosphoryl-MurNAc-pentapeptide, known as lipid I. The protein is Phospho-N-acetylmuramoyl-pentapeptide-transferase of Haemophilus ducreyi (strain 35000HP / ATCC 700724).